Reading from the N-terminus, the 663-residue chain is MAAKEKLEAVLNVALRVPSIMLLDVLYRWDVSSFFQQIQRSSLSNNPLFQYKYLALNMHYVGYILSVVLLTLPRQHLVQLYLYFLTALLLYAGHQISRDYVRSELEFAYEGPMYLEPLSMNRFTTALIGQLVVCTLCSCVMKTKQIWLFSAHMLPLLARLCLVPLETIVIINKFAMIFTGLEVLYFLGSNLLVPYNLAKSAYRELVQVVEVYGLLALGMSLWNQLVVPVLFMVFWLVLFALQIYSYFSTRDQPASRERLLFLFLTSIAECCSTPYSLLGLVFTVSFVALGVLTLCKFYLQGYRAFMNDPAMNRGMTEGVTLLILAVQTGLIELQVVHRAFLLSIILFIVVASILQSMLEIADPIVLALGASRDKSLWKHFRAVSLCLFLLVFPAYMAYMICQFFHMDFWLLIIISSSILTSLQVLGTLFIYVLFMVEEFRKEPVENMDDVIYYVNGTYRLLEFLVALCVVAYGVSETIFGEWTVMGSMIIFIHSYYNVWLRAQLGWKSFLLRRDAVNKIKSLPIATKEQLEKHNDICAICYQDMKSAVITPCSHFFHAGCLKKWLYVQETCPLCHCHLKNSSQLPGLGTEPVLQPHAGAEQNVMFQEGTEPPGQEHTPGTRIQEGSRDNNEYIARRPDNQEGAFDPKEYPHSAKDEAHPVESA.

14 helical membrane passes run 53-73 (YLALNMHYVGYILSVVLLTLP), 77-97 (LVQLYLYFLTALLLYAGHQIS), 123-143 (FTTALIGQLVVCTLCSCVMKT), 146-166 (IWLFSAHMLPLLARLCLVPLE), 168-188 (IVIINKFAMIFTGLEVLYFLG), 205-222 (LVQVVEVYGLLALGMSLW), 225-245 (LVVPVLFMVFWLVLFALQIYS), 275-295 (YSLLGLVFTVSFVALGVLTLC), 316-336 (TEGVTLLILAVQTGLIELQVV), 340-360 (FLLSIILFIVVASILQSMLEI), 384-404 (SLCLFLLVFPAYMAYMICQFF), 410-430 (LLIIISSSILTSLQVLGTLFI), 460-480 (LLEFLVALCVVAYGVSETIFG), and 482-502 (WTVMGSMIIFIHSYYNVWLRA). Positions 81-84 (YLYF) match the YLYF motif motif. Cys-537 is an active-site residue. The RING-type; atypical zinc finger occupies 537-575 (CAICYQDMKSAVITPCSHFFHAGCLKKWLYVQETCPLCH). Residues 607-663 (EGTEPPGQEHTPGTRIQEGSRDNNEYIARRPDNQEGAFDPKEYPHSAKDEAHPVESA) form a disordered region. The span at 624–663 (EGSRDNNEYIARRPDNQEGAFDPKEYPHSAKDEAHPVESA) shows a compositional bias: basic and acidic residues.

Interacts (via YLYF motif) with INSIG1 and INSIG2.

It is found in the endoplasmic reticulum membrane. It carries out the reaction S-ubiquitinyl-[E2 ubiquitin-conjugating enzyme]-L-cysteine + [acceptor protein]-L-lysine = [E2 ubiquitin-conjugating enzyme]-L-cysteine + N(6)-ubiquitinyl-[acceptor protein]-L-lysine.. E3 ubiquitin ligase that catalyzes the direct transfer of ubiquitin from E2 ubiquitin-conjugating enzyme to a specific substrate. In response to bacterial infection, negatively regulates the phagocyte oxidative burst by controlling the turnover of the NADPH oxidase complex subunits. Promotes monoubiquitination of CYBA and 'Lys-48'-linked polyubiquitination and degradation of CYBB NADPH oxidase catalytic subunits, both essential for the generation of antimicrobial reactive oxygen species. Involved in the maintenance of cholesterol homeostasis. In response to high sterol concentrations ubiquitinates HMGCR, a rate-limiting enzyme in cholesterol biosynthesis, and targets it for degradation. The interaction with INSIG1 is required for this function. In addition, triggers ubiquitination of SCAP, likely inhibiting its transport to the Golgi apparatus and the subsequent processing/maturation of SREBPF2, ultimately down-regulating cholesterol biosynthesis. The chain is RING finger protein 145 from Homo sapiens (Human).